A 578-amino-acid polypeptide reads, in one-letter code: Paraneoplastic antigen Ma6F (578 aa).

2 disordered regions span residues 106 to 221 (AQPQ…AGAA) and 441 to 578 (AAPV…PPGK). The span at 112-129 (AVARGAGEAGAAGEAGSV) shows a compositional bias: low complexity. The span at 147-159 (GGIGEAGGVGEAG) shows a compositional bias: gly residues. Positions 160 to 173 (AAGEAGAAGEAGAA) are enriched in low complexity. Residues 174–211 (GEAGGAGEAGGAGEAGGAGEEGGTGEEGGAGEAGGAGE) are compositionally biased toward gly residues. A compositionally biased stretch (low complexity) spans 449-461 (PAAAQASPAQGDA). 2 stretches are compositionally biased toward acidic residues: residues 462-473 (SEADPGAEDADE) and 556-566 (EESENEDEDGA).

The chain is Paraneoplastic antigen Ma6F from Homo sapiens (Human).